Reading from the N-terminus, the 118-residue chain is uncharacterized protein (118 aa).

This sequence to E.coli YeaO.

This is an uncharacterized protein from Mycobacterium bovis (strain ATCC BAA-935 / AF2122/97).